A 93-amino-acid polypeptide reads, in one-letter code: MFFFGIFRCNMDHWTTKRQVYIYLCFSLMTIALICYLIHICCHTKKNVVTNALPSNNMALIPYTPSNNMALIPYTPSNNTVPPPYTISGSCPQ.

Residues 20–40 (VYIYLCFSLMTIALICYLIHI) form a helical membrane-spanning segment. N78 is a glycosylation site (N-linked (GlcNAc...) asparagine; by host).

It belongs to the asfivirus KP93L family.

Its subcellular location is the host membrane. This is an uncharacterized protein from Ornithodoros (relapsing fever ticks).